We begin with the raw amino-acid sequence, 603 residues long: Rab proteins geranylgeranyltransferase component A (603 aa).

Residue serine 470 is modified to Phosphoserine.

Belongs to the Rab GDI family.

Its function is as follows. Substrate-binding subunit (component A) of the Rab geranylgeranyltransferase (GGTase) complex. Binds unprenylated Rab proteins and presents the substrate peptide to the catalytic component B. The component A is thought to be regenerated by transferring its prenylated Rab back to the donor membrane. The polypeptide is Rab proteins geranylgeranyltransferase component A (MRS6) (Saccharomyces cerevisiae (strain ATCC 204508 / S288c) (Baker's yeast)).